Consider the following 230-residue polypeptide: 5'-methylthioadenosine/S-adenosylhomocysteine nucleosidase (230 aa).

Glu-12 acts as the Proton acceptor in catalysis. Substrate contacts are provided by residues Gly-78, Ile-152, and 173–174 (ME). Catalysis depends on Asp-197, which acts as the Proton donor.

Belongs to the PNP/UDP phosphorylase family. MtnN subfamily.

It catalyses the reaction S-adenosyl-L-homocysteine + H2O = S-(5-deoxy-D-ribos-5-yl)-L-homocysteine + adenine. The catalysed reaction is S-methyl-5'-thioadenosine + H2O = 5-(methylsulfanyl)-D-ribose + adenine. The enzyme catalyses 5'-deoxyadenosine + H2O = 5-deoxy-D-ribose + adenine. Its pathway is amino-acid biosynthesis; L-methionine biosynthesis via salvage pathway; S-methyl-5-thio-alpha-D-ribose 1-phosphate from S-methyl-5'-thioadenosine (hydrolase route): step 1/2. Catalyzes the irreversible cleavage of the glycosidic bond in both 5'-methylthioadenosine (MTA) and S-adenosylhomocysteine (SAH/AdoHcy) to adenine and the corresponding thioribose, 5'-methylthioribose and S-ribosylhomocysteine, respectively. Also cleaves 5'-deoxyadenosine, a toxic by-product of radical S-adenosylmethionine (SAM) enzymes, into 5-deoxyribose and adenine. In Actinobacillus succinogenes (strain ATCC 55618 / DSM 22257 / CCUG 43843 / 130Z), this protein is 5'-methylthioadenosine/S-adenosylhomocysteine nucleosidase.